A 345-amino-acid polypeptide reads, in one-letter code: tRNA-specific 2-thiouridylase MnmA (345 aa).

ATP is bound by residues 6–13 (LMSGGVDS) and leucine 32. Cysteine 92 functions as the Nucleophile in the catalytic mechanism. Cysteine 92 and cysteine 191 are oxidised to a cystine. ATP is bound at residue glycine 116. The segment at 138–140 (KDQ) is interaction with tRNA. The Cysteine persulfide intermediate role is filled by cysteine 191. Residues 293–294 (RY) are interaction with tRNA.

The protein belongs to the MnmA/TRMU family.

It is found in the cytoplasm. It carries out the reaction S-sulfanyl-L-cysteinyl-[protein] + uridine(34) in tRNA + AH2 + ATP = 2-thiouridine(34) in tRNA + L-cysteinyl-[protein] + A + AMP + diphosphate + H(+). Catalyzes the 2-thiolation of uridine at the wobble position (U34) of tRNA, leading to the formation of s(2)U34. The sequence is that of tRNA-specific 2-thiouridylase MnmA from Helicobacter hepaticus (strain ATCC 51449 / 3B1).